We begin with the raw amino-acid sequence, 308 residues long: Acetyl-coenzyme A carboxylase carboxyl transferase subunit beta (308 aa).

A CoA carboxyltransferase N-terminal domain is found at 26–295 (LWIKDPETGE…EQKPLEPEIL (270 aa)).

Belongs to the AccD/PCCB family. Acetyl-CoA carboxylase is a heterohexamer composed of biotin carboxyl carrier protein (AccB), biotin carboxylase (AccC) and two subunits each of ACCase subunit alpha (AccA) and ACCase subunit beta (AccD).

Its subcellular location is the cytoplasm. It catalyses the reaction N(6)-carboxybiotinyl-L-lysyl-[protein] + acetyl-CoA = N(6)-biotinyl-L-lysyl-[protein] + malonyl-CoA. Its pathway is lipid metabolism; malonyl-CoA biosynthesis; malonyl-CoA from acetyl-CoA: step 1/1. Its function is as follows. Component of the acetyl coenzyme A carboxylase (ACC) complex. Biotin carboxylase (BC) catalyzes the carboxylation of biotin on its carrier protein (BCCP) and then the CO(2) group is transferred by the transcarboxylase to acetyl-CoA to form malonyl-CoA. This is Acetyl-coenzyme A carboxylase carboxyl transferase subunit beta from Mesorhizobium japonicum (strain LMG 29417 / CECT 9101 / MAFF 303099) (Mesorhizobium loti (strain MAFF 303099)).